Here is a 156-residue protein sequence, read N- to C-terminus: Large ribosomal subunit protein uL13 (156 aa).

Belongs to the universal ribosomal protein uL13 family. Part of the 50S ribosomal subunit.

Functionally, this protein is one of the early assembly proteins of the 50S ribosomal subunit, although it is not seen to bind rRNA by itself. It is important during the early stages of 50S assembly. The protein is Large ribosomal subunit protein uL13 of Archaeoglobus fulgidus (strain ATCC 49558 / DSM 4304 / JCM 9628 / NBRC 100126 / VC-16).